Consider the following 213-residue polypeptide: Pyrrolidone-carboxylate peptidase (213 aa).

Catalysis depends on residues Glu78, Cys141, and His165.

It belongs to the peptidase C15 family. As to quaternary structure, homotetramer.

The protein localises to the cytoplasm. The catalysed reaction is Release of an N-terminal pyroglutamyl group from a polypeptide, the second amino acid generally not being Pro.. Its function is as follows. Removes 5-oxoproline from various penultimate amino acid residues except L-proline. The polypeptide is Pyrrolidone-carboxylate peptidase (Finegoldia magna (strain ATCC 29328 / DSM 20472 / WAL 2508) (Peptostreptococcus magnus)).